The following is a 318-amino-acid chain: Thymidylate synthase (318 aa).

DUMP contacts are provided by residues arginine 25 and 180–181 (RR). The active-site Nucleophile is the cysteine 200. DUMP contacts are provided by residues 220–223 (RSGD), asparagine 231, and 261–263 (HIY). (6R)-5,10-methylene-5,6,7,8-tetrahydrofolate is bound at residue aspartate 223. Alanine 317 serves as a coordination point for (6R)-5,10-methylene-5,6,7,8-tetrahydrofolate.

The protein belongs to the thymidylate synthase family. Bacterial-type ThyA subfamily. In terms of assembly, homodimer.

It localises to the cytoplasm. It catalyses the reaction dUMP + (6R)-5,10-methylene-5,6,7,8-tetrahydrofolate = 7,8-dihydrofolate + dTMP. It participates in pyrimidine metabolism; dTTP biosynthesis. Its function is as follows. Catalyzes the reductive methylation of 2'-deoxyuridine-5'-monophosphate (dUMP) to 2'-deoxythymidine-5'-monophosphate (dTMP) while utilizing 5,10-methylenetetrahydrofolate (mTHF) as the methyl donor and reductant in the reaction, yielding dihydrofolate (DHF) as a by-product. This enzymatic reaction provides an intracellular de novo source of dTMP, an essential precursor for DNA biosynthesis. The polypeptide is Thymidylate synthase (Lactobacillus johnsonii (strain CNCM I-12250 / La1 / NCC 533)).